Here is a 150-residue protein sequence, read N- to C-terminus: Nucleoside diphosphate kinase (150 aa).

Residues K10, F58, R86, T92, R103, and N113 each contribute to the ATP site. The active-site Pros-phosphohistidine intermediate is the H116.

Belongs to the NDK family. As to quaternary structure, homohexamer. Mg(2+) serves as cofactor.

The enzyme catalyses a 2'-deoxyribonucleoside 5'-diphosphate + ATP = a 2'-deoxyribonucleoside 5'-triphosphate + ADP. It carries out the reaction a ribonucleoside 5'-diphosphate + ATP = a ribonucleoside 5'-triphosphate + ADP. Its function is as follows. Major role in the synthesis of nucleoside triphosphates other than ATP. The ATP gamma phosphate is transferred to the NDP beta phosphate via a ping-pong mechanism, using a phosphorylated active-site intermediate. This is Nucleoside diphosphate kinase (awd) from Drosophila yakuba (Fruit fly).